The primary structure comprises 455 residues: Bifunctional protein GlmU (455 aa).

The pyrophosphorylase stretch occupies residues 1–226 (MSLDIVILAA…AMEVQGANDR (226 aa)). Residues 8 to 11 (LAAG), Lys22, Gln73, 78 to 79 (GT), 99 to 101 (YGD), Gly136, Glu151, Asn166, and Asn224 contribute to the UDP-N-acetyl-alpha-D-glucosamine site. Asp101 is a Mg(2+) binding site. Mg(2+) is bound at residue Asn224. The linker stretch occupies residues 227-247 (KQLSELERHYQMREARRLMAA). Residues 248 to 455 (GVTLRDPARF…WKRPVKISKD (208 aa)) are N-acetyltransferase. UDP-N-acetyl-alpha-D-glucosamine is bound by residues Arg330 and Lys348. His360 functions as the Proton acceptor in the catalytic mechanism. 2 residues coordinate UDP-N-acetyl-alpha-D-glucosamine: Tyr363 and Asn374. Acetyl-CoA is bound by residues Ala377, 383–384 (NY), Ser402, Ala420, and Arg437.

It in the N-terminal section; belongs to the N-acetylglucosamine-1-phosphate uridyltransferase family. In the C-terminal section; belongs to the transferase hexapeptide repeat family. Homotrimer. Requires Mg(2+) as cofactor.

The protein resides in the cytoplasm. It carries out the reaction alpha-D-glucosamine 1-phosphate + acetyl-CoA = N-acetyl-alpha-D-glucosamine 1-phosphate + CoA + H(+). The catalysed reaction is N-acetyl-alpha-D-glucosamine 1-phosphate + UTP + H(+) = UDP-N-acetyl-alpha-D-glucosamine + diphosphate. It functions in the pathway nucleotide-sugar biosynthesis; UDP-N-acetyl-alpha-D-glucosamine biosynthesis; N-acetyl-alpha-D-glucosamine 1-phosphate from alpha-D-glucosamine 6-phosphate (route II): step 2/2. The protein operates within nucleotide-sugar biosynthesis; UDP-N-acetyl-alpha-D-glucosamine biosynthesis; UDP-N-acetyl-alpha-D-glucosamine from N-acetyl-alpha-D-glucosamine 1-phosphate: step 1/1. Its pathway is bacterial outer membrane biogenesis; LPS lipid A biosynthesis. Catalyzes the last two sequential reactions in the de novo biosynthetic pathway for UDP-N-acetylglucosamine (UDP-GlcNAc). The C-terminal domain catalyzes the transfer of acetyl group from acetyl coenzyme A to glucosamine-1-phosphate (GlcN-1-P) to produce N-acetylglucosamine-1-phosphate (GlcNAc-1-P), which is converted into UDP-GlcNAc by the transfer of uridine 5-monophosphate (from uridine 5-triphosphate), a reaction catalyzed by the N-terminal domain. This is Bifunctional protein GlmU from Pseudomonas syringae pv. syringae (strain B728a).